A 387-amino-acid polypeptide reads, in one-letter code: Lipid-A-disaccharide synthase (387 aa).

This sequence belongs to the LpxB family.

The enzyme catalyses 2-N,3-O-bis[(3R)-3-hydroxytetradecanoyl]-alpha-D-glucosaminyl 1-phosphate + UDP-2-N,3-O-bis[(3R)-3-hydroxytetradecanoyl]-alpha-D-glucosamine = lipid A disaccharide (E. coli) + UDP + H(+). The catalysed reaction is a lipid X + a UDP-2-N,3-O-bis[(3R)-3-hydroxyacyl]-alpha-D-glucosamine = a lipid A disaccharide + UDP + H(+). Its pathway is glycolipid biosynthesis; lipid IV(A) biosynthesis; lipid IV(A) from (3R)-3-hydroxytetradecanoyl-[acyl-carrier-protein] and UDP-N-acetyl-alpha-D-glucosamine: step 5/6. Its function is as follows. Condensation of UDP-2,3-diacylglucosamine and 2,3-diacylglucosamine-1-phosphate to form lipid A disaccharide, a precursor of lipid A, a phosphorylated glycolipid that anchors the lipopolysaccharide to the outer membrane of the cell. This is Lipid-A-disaccharide synthase from Blochmanniella pennsylvanica (strain BPEN).